Here is a 764-residue protein sequence, read N- to C-terminus: Probable 5-methyltetrahydropteroyltriglutamate--homocysteine methyltransferase (764 aa).

Positions 19 and 126 each coordinate 5-methyltetrahydropteroyltri-L-glutamate. Position 182 is a phosphoserine (Ser182). Phosphothreonine is present on Thr441. L-homocysteine is bound by residues 442–444 and Glu495; that span reads IGS. L-methionine-binding positions include 442-444 and Glu495; that span reads IGS. 5-methyltetrahydropteroyltri-L-glutamate-binding positions include Asp500, Tyr523, 526 to 527, and Trp572; that span reads RC. Asp610 lines the L-homocysteine pocket. Asp610 lines the L-methionine pocket. The Zn(2+) site is built by His652, Cys654, and Glu676. Catalysis depends on His703, which acts as the Proton donor. Cys735 is a Zn(2+) binding site.

This sequence belongs to the vitamin-B12 independent methionine synthase family. Requires Zn(2+) as cofactor.

It localises to the nucleus. Its subcellular location is the cytoplasm. The catalysed reaction is 5-methyltetrahydropteroyltri-L-glutamate + L-homocysteine = tetrahydropteroyltri-L-glutamate + L-methionine. It participates in amino-acid biosynthesis; L-methionine biosynthesis via de novo pathway; L-methionine from L-homocysteine (MetE route): step 1/1. Catalyzes the transfer of a methyl group from 5-methyltetrahydrofolate to homocysteine resulting in methionine formation. The polypeptide is Probable 5-methyltetrahydropteroyltriglutamate--homocysteine methyltransferase (met26) (Schizosaccharomyces pombe (strain 972 / ATCC 24843) (Fission yeast)).